The following is a 146-amino-acid chain: Holo-[acyl-carrier-protein] synthase (146 aa).

Positions 9 and 63 each coordinate Mg(2+).

Belongs to the P-Pant transferase superfamily. AcpS family. Mg(2+) is required as a cofactor.

It localises to the cytoplasm. It carries out the reaction apo-[ACP] + CoA = holo-[ACP] + adenosine 3',5'-bisphosphate + H(+). Functionally, transfers the 4'-phosphopantetheine moiety from coenzyme A to a Ser of acyl-carrier-protein. The chain is Holo-[acyl-carrier-protein] synthase from Burkholderia multivorans (strain ATCC 17616 / 249).